A 208-amino-acid polypeptide reads, in one-letter code: uncharacterized protein (208 aa).

Over residues 1 to 18 (MSPTKDSHPSPHFPRDSG) the composition is skewed to basic and acidic residues. 2 disordered regions span residues 1–122 (MSPT…LPPP) and 135–208 (RECH…TPDG).

This is an uncharacterized protein from Homo sapiens (Human).